Reading from the N-terminus, the 1130-residue chain is ABC transporter ATM1 (1130 aa).

A mitochondrion-targeting transit peptide spans 1–65; that stretch reads MQPPTRAPFF…ESFHSSAFQL (65 aa). Disordered stretches follow at residues 191 to 212, 276 to 315, and 341 to 385; these read DAWT…CVRP, HHAP…RNMS, and STFS…TSSP. Composition is skewed to polar residues over residues 195–206 and 305–315; these read SGCSGQTDNATA and GSLTLSPRNMS. The helical transmembrane segment at 406–426 threads the bilayer; the sequence is PNPTSLQLLFSLFPFLWPTAL. A compositionally biased stretch (low complexity) spans 468–502; that stretch reads PLSPSGASPSSGDTSLLASSGETSSSLSPSAAPAE. The tract at residues 468 to 554 is disordered; that stretch reads PLSPSGASPS…AGKAGTSVGG (87 aa). Basic and acidic residues predominate over residues 503-523; the sequence is GAREAGKSGESAGRERRDEGS. The next 5 membrane-spanning stretches (helical) occupy residues 574 to 594, 653 to 673, 678 to 698, 761 to 781, and 791 to 811; these read IVSV…AATG, VLLF…YLLG, GPVA…TAAV, LAFL…GSLA, and LLPV…AVPL. Residues 587 to 823 form the ABC transmembrane type-1 domain; the sequence is VARIAATGFN…VGTIYRETSL (237 aa). The ABC transporter domain occupies 857 to 1111; that stretch reads VAFENVRFAY…ERGLYRALWE (255 aa). 910–917 provides a ligand contact to ATP; sequence GPSGVGKS.

Belongs to the ABC transporter superfamily. ABCB family. Heavy Metal importer (TC 3.A.1.210) subfamily. Homodimer.

Its subcellular location is the mitochondrion membrane. Its function is as follows. Probably transports iron-sulfur clusters in an ATP-dependent manner. Plays a role in [Fe-S] proteins homeostasis. Required for optimal parasite growth and lytic cycle. This Toxoplasma gondii (strain ATCC 50611 / Me49) protein is ABC transporter ATM1.